Reading from the N-terminus, the 162-residue chain is Regulator of ribonuclease activity A (162 aa).

It belongs to the RraA family. Homotrimer. Binds to both RNA-binding sites in the C-terminal region of Rne and to RhlB.

It is found in the cytoplasm. Globally modulates RNA abundance by binding to RNase E (Rne) and regulating its endonucleolytic activity. Can modulate Rne action in a substrate-dependent manner by altering the composition of the degradosome. Modulates RNA-binding and helicase activities of the degradosome. The chain is Regulator of ribonuclease activity A from Haemophilus influenzae (strain ATCC 51907 / DSM 11121 / KW20 / Rd).